The following is a 94-amino-acid chain: FXYD domain-containing ion transport regulator 6 (94 aa).

A signal peptide spans Met1–Ala17. The Extracellular segment spans residues Ser18 to Gln34. A helical transmembrane segment spans residues Thr35 to Ser57. The Cytoplasmic segment spans residues Arg58–Asn94.

Belongs to the FXYD family. As to quaternary structure, regulatory subunit of the sodium/potassium-transporting ATPase which is composed of a catalytic alpha subunit, a non-catalytic beta subunit and an additional regulatory subunit. The regulatory subunit, a member of the FXYD protein family, modulates the enzymatic activity in a tissue- and isoform-specific way by changing affinities of the Na+/K+-ATPase toward Na(+), K(+) or ATP.

The protein resides in the cell membrane. Associates with and regulates the activity of the sodium/potassium-transporting ATPase (NKA) which catalyzes the hydrolysis of ATP coupled with the exchange of Na(+) and K(+) ions across the plasma membrane. Reduces the apparent affinity for intracellular Na(+) with no change in the apparent affinity for extracellular K(+). In addition to modulating NKA kinetics, may also function as a regulator of NKA localization to the plasma membrane. The sequence is that of FXYD domain-containing ion transport regulator 6 (Fxyd6) from Mus musculus (Mouse).